The sequence spans 344 residues: N-acetyl-gamma-glutamyl-phosphate reductase (344 aa).

C150 is a catalytic residue.

Belongs to the NAGSA dehydrogenase family. Type 1 subfamily.

Its subcellular location is the cytoplasm. It carries out the reaction N-acetyl-L-glutamate 5-semialdehyde + phosphate + NADP(+) = N-acetyl-L-glutamyl 5-phosphate + NADPH + H(+). Its pathway is amino-acid biosynthesis; L-arginine biosynthesis; N(2)-acetyl-L-ornithine from L-glutamate: step 3/4. Its function is as follows. Catalyzes the NADPH-dependent reduction of N-acetyl-5-glutamyl phosphate to yield N-acetyl-L-glutamate 5-semialdehyde. The polypeptide is N-acetyl-gamma-glutamyl-phosphate reductase (Ectopseudomonas mendocina (strain ymp) (Pseudomonas mendocina)).